We begin with the raw amino-acid sequence, 118 residues long: Large ribosomal subunit protein bL20 (118 aa).

This sequence belongs to the bacterial ribosomal protein bL20 family. In terms of assembly, part of the 50S ribosomal subunit. Contacts proteins L13 and L21.

Its function is as follows. Binds directly to 23S rRNA, probably serving to organize its structure. The protein is Large ribosomal subunit protein bL20 (rplT) of Deinococcus radiodurans (strain ATCC 13939 / DSM 20539 / JCM 16871 / CCUG 27074 / LMG 4051 / NBRC 15346 / NCIMB 9279 / VKM B-1422 / R1).